A 364-amino-acid chain; its full sequence is GDSL esterase/lipase EXL3 (364 aa).

Positions 1-32 (MKDNSSWSCSCSWSSWKICLLSVLFLTETITA) are cleaved as a signal peptide. S50 serves as the catalytic Nucleophile. Active-site residues include D339 and H342.

The protein belongs to the 'GDSL' lipolytic enzyme family. Flower buds.

It is found in the secreted. This Arabidopsis thaliana (Mouse-ear cress) protein is GDSL esterase/lipase EXL3 (EXL3).